The chain runs to 556 residues: 2-succinyl-5-enolpyruvyl-6-hydroxy-3-cyclohexene-1-carboxylate synthase (556 aa).

The protein belongs to the TPP enzyme family. MenD subfamily. As to quaternary structure, homodimer. Mg(2+) is required as a cofactor. It depends on Mn(2+) as a cofactor. The cofactor is thiamine diphosphate.

The catalysed reaction is isochorismate + 2-oxoglutarate + H(+) = 5-enolpyruvoyl-6-hydroxy-2-succinyl-cyclohex-3-ene-1-carboxylate + CO2. It functions in the pathway quinol/quinone metabolism; 1,4-dihydroxy-2-naphthoate biosynthesis; 1,4-dihydroxy-2-naphthoate from chorismate: step 2/7. The protein operates within quinol/quinone metabolism; menaquinone biosynthesis. Functionally, catalyzes the thiamine diphosphate-dependent decarboxylation of 2-oxoglutarate and the subsequent addition of the resulting succinic semialdehyde-thiamine pyrophosphate anion to isochorismate to yield 2-succinyl-5-enolpyruvyl-6-hydroxy-3-cyclohexene-1-carboxylate (SEPHCHC). The polypeptide is 2-succinyl-5-enolpyruvyl-6-hydroxy-3-cyclohexene-1-carboxylate synthase (Staphylococcus haemolyticus (strain JCSC1435)).